Reading from the N-terminus, the 515-residue chain is Arabinose import ATP-binding protein AraG 2 (515 aa).

Residues 1 to 22 are disordered; sequence MTMQTMTAASGHDAEAGTPPDG. ABC transporter domains are found at residues 25–260 and 260–511; these read LALD…MVGR and RSIE…LIKL. An ATP-binding site is contributed by 57-64; the sequence is GENGAGKS.

The protein belongs to the ABC transporter superfamily. Arabinose importer (TC 3.A.1.2.2) family. In terms of assembly, the complex is composed of two ATP-binding proteins (AraG), two transmembrane proteins (AraH) and a solute-binding protein (AraF).

It is found in the cell inner membrane. It carries out the reaction L-arabinose(out) + ATP + H2O = L-arabinose(in) + ADP + phosphate + H(+). Functionally, part of the ABC transporter complex AraFGH involved in arabinose import. Responsible for energy coupling to the transport system. The sequence is that of Arabinose import ATP-binding protein AraG 2 from Burkholderia cenocepacia (strain HI2424).